The chain runs to 445 residues: 6-phosphogluconate dehydrogenase, decarboxylating (445 aa).

NADP(+) contacts are provided by residues 1–4, 22–24, 63–65, and asparagine 91; these read AVMG, NRS, and VKA. Substrate-binding positions include asparagine 91 and 117–119; that span reads SGG. Lysine 172 acts as the Proton acceptor in catalysis. Position 175–176 (175–176) interacts with substrate; the sequence is HN. The active-site Proton donor is the glutamate 179. Substrate contacts are provided by tyrosine 180, lysine 249, arginine 276, arginine 434, and histidine 440.

It belongs to the 6-phosphogluconate dehydrogenase family. Homodimer.

The catalysed reaction is 6-phospho-D-gluconate + NADP(+) = D-ribulose 5-phosphate + CO2 + NADPH. It functions in the pathway carbohydrate degradation; pentose phosphate pathway; D-ribulose 5-phosphate from D-glucose 6-phosphate (oxidative stage): step 3/3. Catalyzes the oxidative decarboxylation of 6-phosphogluconate to ribulose 5-phosphate and CO(2), with concomitant reduction of NADP to NADPH. This Raoultella planticola (Klebsiella planticola) protein is 6-phosphogluconate dehydrogenase, decarboxylating (gnd).